The chain runs to 446 residues: MRYLPLTPEDRAEMLARIGVASVDELFVDIPADKRETALPRLALHKSELEVERTLARLAGQNVPAGSVPFFVGAGAYRHHVPATVDHLIQRSEFLTSYTPYQPEIAQGTLQYLFEFQTQVAELTAMEVANASMYDGSTAAAEAVLMAHRVTRRRKAVLAGNLHPHYRSTIETVSRYAADEVVALPPAPFGEEDLITPIDDTVSCVVVQSPDVFGNLVDLKPIAEAAHKAGALLVAVFTEAVALGLIEPPGAQGADIVVGEGQSIGNALNFGGPYVGLFATRQKFVRQMPGRLAGETVDAEGRRGFVLTLSTREQHIRREKATSNICTNSGLCALAFTIHMSLLGKTGLTRLARANHAAACDLADRLAAVKGASVVNDTFFNEFTLRVPGPAADVVEKLAAKGILAGVPYSRLAPKSGLDDLILVAATETTTEDDRAAYAAALKEVL.

The protein belongs to the GcvP family. N-terminal subunit subfamily. As to quaternary structure, the glycine cleavage system is composed of four proteins: P, T, L and H. In this organism, the P 'protein' is a heterodimer of two subunits.

The catalysed reaction is N(6)-[(R)-lipoyl]-L-lysyl-[glycine-cleavage complex H protein] + glycine + H(+) = N(6)-[(R)-S(8)-aminomethyldihydrolipoyl]-L-lysyl-[glycine-cleavage complex H protein] + CO2. Functionally, the glycine cleavage system catalyzes the degradation of glycine. The P protein binds the alpha-amino group of glycine through its pyridoxal phosphate cofactor; CO(2) is released and the remaining methylamine moiety is then transferred to the lipoamide cofactor of the H protein. The protein is Probable glycine dehydrogenase (decarboxylating) subunit 1 of Xanthobacter autotrophicus (strain ATCC BAA-1158 / Py2).